The sequence spans 99 residues: MSRVCELTGKAVLTGNNVSHANNKTKRRFLPNLCQVTLISDALNQRYRLRVSAAALRSVEHRGGLDAFLLKASETELSMRARLLRRQIVKKTAEAAVAA.

This sequence belongs to the bacterial ribosomal protein bL28 family.

The protein is Large ribosomal subunit protein bL28 of Rhizobium leguminosarum bv. trifolii (strain WSM2304).